Here is a 466-residue protein sequence, read N- to C-terminus: Adenosylhomocysteinase (466 aa).

Residues threonine 57, aspartate 132, and glutamate 192 each coordinate substrate. Residue 193-195 (TTT) coordinates NAD(+). Residues lysine 222 and aspartate 226 each contribute to the substrate site. NAD(+)-binding positions include asparagine 227, 256-261 (GYGDVG), glutamate 279, asparagine 314, 335-337 (IGH), and asparagine 380.

It belongs to the adenosylhomocysteinase family. It depends on NAD(+) as a cofactor.

It localises to the cytoplasm. The enzyme catalyses S-adenosyl-L-homocysteine + H2O = L-homocysteine + adenosine. Its pathway is amino-acid biosynthesis; L-homocysteine biosynthesis; L-homocysteine from S-adenosyl-L-homocysteine: step 1/1. In terms of biological role, may play a key role in the regulation of the intracellular concentration of adenosylhomocysteine. The protein is Adenosylhomocysteinase of Rhizobium meliloti (strain 1021) (Ensifer meliloti).